The chain runs to 367 residues: tRNA-dihydrouridine(20a/20b) synthase [NAD(P)+] (367 aa).

FMN-binding positions include 45 to 47 (PMV) and Gln99. Cys128 acts as the Proton donor in catalysis. Residues Lys169, His197, 231–233 (NGD), and 255–256 (VR) each bind FMN.

It belongs to the Dus family. Dus4 subfamily. FMN serves as cofactor.

The catalysed reaction is 5,6-dihydrouridine(20a) in tRNA + NADP(+) = uridine(20a) in tRNA + NADPH + H(+). It catalyses the reaction 5,6-dihydrouridine(20a) in tRNA + NAD(+) = uridine(20a) in tRNA + NADH + H(+). The enzyme catalyses 5,6-dihydrouridine(20b) in tRNA + NAD(+) = uridine(20b) in tRNA + NADH + H(+). It carries out the reaction 5,6-dihydrouridine(20b) in tRNA + NADP(+) = uridine(20b) in tRNA + NADPH + H(+). The catalysed reaction is a 5,6-dihydrouridine in mRNA + NAD(+) = a uridine in mRNA + NADH + H(+). It catalyses the reaction a 5,6-dihydrouridine in mRNA + NADP(+) = a uridine in mRNA + NADPH + H(+). Its function is as follows. Catalyzes the synthesis of dihydrouridine, a modified base found in the D-loop of most tRNAs. Specifically modifies U20a and U20b in cytoplasmic tRNAs. Also able to mediate dihydrouridylation of some mRNAs, thereby affecting their translation. In Saccharomyces cerevisiae (strain ATCC 204508 / S288c) (Baker's yeast), this protein is tRNA-dihydrouridine(20a/20b) synthase [NAD(P)+].